Consider the following 443-residue polypeptide: Chromosome partition protein MukF (443 aa).

Residues 209–237 form a leucine-zipper region; the sequence is LDETSINLRELQDTLNAAGDKLQSQLLRI.

It belongs to the MukF family. As to quaternary structure, interacts, and probably forms a ternary complex, with MukE and MukB via its C-terminal region. The complex formation is stimulated by calcium or magnesium. It is required for an interaction between MukE and MukB.

It localises to the cytoplasm. It is found in the nucleoid. In terms of biological role, involved in chromosome condensation, segregation and cell cycle progression. May participate in facilitating chromosome segregation by condensation DNA from both sides of a centrally located replisome during cell division. Not required for mini-F plasmid partitioning. Probably acts via its interaction with MukB and MukE. Overexpression results in anucleate cells. It has a calcium binding activity. The protein is Chromosome partition protein MukF of Haemophilus ducreyi (strain 35000HP / ATCC 700724).